Reading from the N-terminus, the 624-residue chain is Bifunctional 3'-phosphoadenosine 5'-phosphosulfate synthase 1 (624 aa).

Met-1 bears the N-acetylmethionine mark. Positions 1 to 225 (MELPGSLCKK…VVELLQERDI (225 aa)) are adenylyl-sulfate kinase. Position 12 is an N6-acetyllysine (Lys-12). Residue 62–67 (GAGKTT) coordinates ATP. Adenosine 5'-phosphosulfate is bound by residues 89–92 (DNIR), Phe-101, 106–109 (REEN), 132–133 (IS), Lys-171, and 184–185 (GF). Residues Cys-207, Cys-212, 419–422 (QLRN), 521–525 (GRDPA), and Ala-563 contribute to the ATP site. The segment at 234-624 (VKELYVPENK…AEYYKALEKA (391 aa)) is sulfate adenylyltransferase.

It in the N-terminal section; belongs to the APS kinase family. This sequence in the C-terminal section; belongs to the sulfate adenylyltransferase family. As to quaternary structure, homodimer.

It carries out the reaction sulfate + ATP + H(+) = adenosine 5'-phosphosulfate + diphosphate. The enzyme catalyses adenosine 5'-phosphosulfate + ATP = 3'-phosphoadenylyl sulfate + ADP + H(+). Its pathway is sulfur metabolism; sulfate assimilation. Functionally, bifunctional enzyme with both ATP sulfurylase and APS kinase activity, which mediates two steps in the sulfate activation pathway. The first step is the transfer of a sulfate group to ATP to yield adenosine 5'-phosphosulfate (APS), and the second step is the transfer of a phosphate group from ATP to APS yielding 3'-phosphoadenylylsulfate (PAPS: activated sulfate donor used by sulfotransferase). In mammals, PAPS is the sole source of sulfate; APS appears to be only an intermediate in the sulfate-activation pathway. Required for normal biosynthesis of sulfated L-selectin ligands in endothelial cells. The protein is Bifunctional 3'-phosphoadenosine 5'-phosphosulfate synthase 1 (PAPSS1) of Cavia porcellus (Guinea pig).